An 800-amino-acid polypeptide reads, in one-letter code: Transducin beta-like protein 3 (800 aa).

Residue alanine 2 is modified to N-acetylalanine. WD repeat units lie at residues 64 to 105 (EDQE…RLWK), 107 to 146 (IHTA…GTHH), 149 to 190 (GSPG…CLAV), 193 to 232 (AHYS…TSRT), 245 to 284 (LPEE…CVYT), 290 to 329 (GLRQ…LQKQ), 332 to 372 (GYSE…CQIL), 374 to 413 (GHTD…QVAC), 419 to 459 (GHTH…PSKN), 477 to 516 (CHDK…LLGV), 519 to 560 (GHRR…KTFE), 562 to 602 (HDAS…RTLD), and 604 to 642 (HEDK…EQAE). Lysine 407 participates in a covalent cross-link: Glycyl lysine isopeptide (Lys-Gly) (interchain with G-Cter in SUMO2).

Part of the small subunit (SSU) processome, composed of more than 70 proteins and the RNA chaperone small nucleolar RNA (snoRNA) U3.

The protein localises to the nucleus. It localises to the nucleolus. Part of the small subunit (SSU) processome, first precursor of the small eukaryotic ribosomal subunit. During the assembly of the SSU processome in the nucleolus, many ribosome biogenesis factors, an RNA chaperone and ribosomal proteins associate with the nascent pre-rRNA and work in concert to generate RNA folding, modifications, rearrangements and cleavage as well as targeted degradation of pre-ribosomal RNA by the RNA exosome. In Rattus norvegicus (Rat), this protein is Transducin beta-like protein 3 (Tbl3).